The chain runs to 620 residues: tRNA uridine 5-carboxymethylaminomethyl modification enzyme MnmG (620 aa).

Residues 13 to 18 (GGGHAG), V125, and S182 each bind FAD. NAD(+) is bound at residue 280–294 (GPRYCPSVEDKIVKF). An FAD-binding site is contributed by N377.

It belongs to the MnmG family. Homodimer. Heterotetramer of two MnmE and two MnmG subunits. FAD is required as a cofactor.

The protein resides in the cytoplasm. NAD-binding protein involved in the addition of a carboxymethylaminomethyl (cmnm) group at the wobble position (U34) of certain tRNAs, forming tRNA-cmnm(5)s(2)U34. The chain is tRNA uridine 5-carboxymethylaminomethyl modification enzyme MnmG from Sulfurihydrogenibium sp. (strain YO3AOP1).